Consider the following 324-residue polypeptide: MTISLDSLRLDPPVLLAPMAGITDLPFRRMVARFGAGLVVSEMVASGEMLTAKPSVRAKAQAELTAGLPTSVQLAGREAAPMAEAAKIVADMGAEIIDINMGCPAKKVTGGLSGAALMRNPDHALRLIEAVVGAVDLPVTLKMRLGWDEDQLNAAEIAARAEAAGVKMIVIHGRTRMQFYTGAADWRAIAAVRAAVSVPVVANGDITDAASARRALDQSGAAGVMVGRGAQGAPWRLAQIAAALFGKADPKLPSGSEFSDFVSEHYEAILSFYGRDLGLRIARKHLGWYAEAAAAPLRAEMMRATDPAATLALIRSAFSEREAA.

Residues 18 to 20 (PMA) and Gln-73 each bind FMN. The active-site Proton donor is Cys-103. FMN is bound by residues Lys-142, 203–205 (NGD), and 227–228 (GR).

This sequence belongs to the Dus family. It depends on FMN as a cofactor.

It catalyses the reaction a 5,6-dihydrouridine in tRNA + NAD(+) = a uridine in tRNA + NADH + H(+). The enzyme catalyses a 5,6-dihydrouridine in tRNA + NADP(+) = a uridine in tRNA + NADPH + H(+). Functionally, catalyzes the synthesis of 5,6-dihydrouridine (D), a modified base found in the D-loop of most tRNAs, via the reduction of the C5-C6 double bond in target uridines. The chain is Probable tRNA-dihydrouridine synthase (dus) from Rhodobacter capsulatus (strain ATCC BAA-309 / NBRC 16581 / SB1003).